Here is a 489-residue protein sequence, read N- to C-terminus: Diacylglycerol O-acyltransferase 1 (489 aa).

The segment at 1-54 (MGDRGGAGGSRRRRTGSRPSIQGGSGPAAAEEEVRDVGAGGDAPVRDTDKDGDV) is disordered. At 1–80 (MGDRGGAGGS…SLFSSDSGFS (80 aa)) the chain is on the cytoplasmic side. The interval 1–88 (MGDRGGAGGS…FSNYRGILNW (88 aa)) is involved in homomerization. A Phosphoserine modification is found at serine 20. Over residues 44–53 (PVRDTDKDGD) the composition is skewed to basic and acidic residues. The chain crosses the membrane as a helical span at residues 81–115 (NYRGILNWCVVMLILSNARLFLENLIKYGILVDPI). At 116 to 127 (QVVSLFLKDPYS) the chain is on the lumenal side. Positions 116-127 (QVVSLFLKDPYS) are extracellular loop 1 (EL1). Residues 128–153 (WPALCLVIVANIFAVAAFQVEKRLAV) traverse the membrane as a helical segment. An MBOAT fold region spans residues 128–489 (WPALCLVIVA…LNREAPAAGT (362 aa)). The Cytoplasmic portion of the chain corresponds to 154-158 (GALTE). Residues 159–181 (QAGLLLHGVNLATILCFPAAVAF) traverse the membrane as a helical segment. The Lumenal portion of the chain corresponds to 182–188 (LLESITP). The chain crosses the membrane as a helical span at residues 189–220 (VGSVLALMVYTILFLKLFSYRDVNLWCRERRA). The Cytoplasmic portion of the chain corresponds to 221-274 (GAKAKAALAGKKANGGAAQRTVSYPDNLTYRDLYYFLFAPTLCYELNFPRSPRI). The tract at residues 225–277 (KAALAGKKANGGAAQRTVSYPDNLTYRDLYYFLFAPTLCYELNFPRSPRIRKR) is intracellular loop 1 (IL1). The helical transmembrane segment at 275 to 309 (RKRFLLRRLLEMLFLTQLQVGLIQQWMVPAIQNSM) threads the bilayer. Residues 310-316 (KPFKDMD) lie on the Lumenal side of the membrane. Residues 317–354 (YSRIVERLLKLAVPNHLIWLIFFYWLFHSCLNAVAELM) traverse the membrane as a helical segment. Residues 355–400 (QFGDREFYRDWWNSESITYFWQNWNIPVHKWCIRHFYKPMLRRGSS) lie on the Cytoplasmic side of the membrane. The segment at 355–400 (QFGDREFYRDWWNSESITYFWQNWNIPVHKWCIRHFYKPMLRRGSS) is intracellular loop 2 (IL2). An FYXDWWN motif motif is present at residues 361–367 (FYRDWWN). Residues 375–383 (WQNWNIPVH), tyrosine 391, and arginine 405 each bind an acyl-CoA. Positions 381-395 (PVHKWCIRHFYKPML) are amphipathic helix (AH). A helical transmembrane segment spans residues 401-421 (KWAARTAVFLASAFFHEYLVS). Histidine 416 is a catalytic residue. Residues 422–429 (IPLRMFRL) are Lumenal-facing. Residues 430-448 (WAFTGMMAQIPLAWIVGRF) form a helical membrane-spanning segment. At 449–450 (FR) the chain is on the cytoplasmic side. Residues 451 to 482 (GNYGNAAVWLSLIIGQPVAVLMYVHDYYVLNR) traverse the membrane as a helical segment. Tyrosine 478 serves as a coordination point for an acyl-CoA. At 483-489 (EAPAAGT) the chain is on the lumenal side.

It belongs to the membrane-bound acyltransferase family. Sterol o-acyltransferase subfamily. In terms of assembly, homodimer or homotetramer; both forms have similar enzymatic activities.

Its subcellular location is the endoplasmic reticulum membrane. It carries out the reaction an acyl-CoA + a 1,2-diacyl-sn-glycerol = a triacyl-sn-glycerol + CoA. It catalyses the reaction all-trans-retinol + an acyl-CoA = an all-trans-retinyl ester + CoA. The catalysed reaction is 2-(9Z-octadecenoyl)-glycerol + (9Z)-octadecenoyl-CoA = 1,2-di-(9Z-octadecenoyl)-sn-glycerol + CoA. The enzyme catalyses 1,2-di-(9Z-octadecenoyl)-sn-glycerol + (9Z)-octadecenoyl-CoA = 1,2,3-tri-(9Z-octadecenoyl)-glycerol + CoA. It carries out the reaction all-trans-retinol + hexadecanoyl-CoA = all-trans-retinyl hexadecanoate + CoA. It catalyses the reaction 1-O-(9Z-octadecenyl)-glycerol + (9Z)-octadecenoyl-CoA = 1-O-(9Z-octadecyl)-3-(9Z-octadecenoyl)-glycerol + CoA. The catalysed reaction is 1-O-(9Z-octadecyl)-3-(9Z-octadecenoyl)-glycerol + (9Z)-octadecenoyl-CoA = 1-O-(9Z-octadecenyl)-2,3-di-(9Z-octadecenoyl)glycerol + CoA. The enzyme catalyses 1-(9Z-octadecenoyl)-glycerol + (9Z)-octadecenoyl-CoA = 1,2-di-(9Z-octadecenoyl)-glycerol + CoA. It carries out the reaction 1,2-di-(9Z-octadecenoyl)-glycerol + (9Z)-octadecenoate + H(+) = 1,2,3-tri-(9Z-octadecenoyl)-glycerol + H2O. It catalyses the reaction 1-octadecanoyl-2-(5Z,8Z,11Z,14Z-eicosatetraenoyl)-sn-glycerol + (9Z)-octadecenoyl-CoA = 1-octadecanoyl-2-(5Z,8Z,11Z,14Z)-eicosatetraenoyl-3-(9Z)-octadecenoyl-sn-glycerol + CoA. The catalysed reaction is hexadecane-1,2-diol + 2 hexadecanoyl-CoA = 1,2-O,O-dihexadecanoyl-1,2-hexadecanediol + 2 CoA. The enzyme catalyses hexadecane-1,2-diol + hexadecanoyl-CoA = 2-hydroxyhexadecyl hexadecanoate + CoA. It carries out the reaction 2-(9Z-octadecenoyl)-glycerol + hexadecanoyl-CoA = 1-hexadecanoyl-2-(9Z-octadecenoyl)-sn-glycerol + CoA. It catalyses the reaction 1,2-di-(9Z-octadecenoyl)-sn-glycerol + hexadecanoyl-CoA = 1,2-di-(9Z)-octadecenoyl-3-hexadecanoyl-sn-glycerol + CoA. The catalysed reaction is hexadecan-1-ol + hexadecanoyl-CoA = hexadecanyl hexadecanoate + CoA. The enzyme catalyses 13-cis-retinol + hexadecanoyl-CoA = 13-cis-retinyl hexadecanoate + CoA. It carries out the reaction 1,3-di-(9Z-octadecenoyl)-glycerol + (9Z)-octadecenoyl-CoA = 1,2,3-tri-(9Z-octadecenoyl)-glycerol + CoA. It catalyses the reaction 2,3-di-(9Z)-octadecenoyl-sn-glycerol + (9Z)-octadecenoyl-CoA = 1,2,3-tri-(9Z-octadecenoyl)-glycerol + CoA. It functions in the pathway lipid metabolism; glycerolipid metabolism. Its function is as follows. Catalyzes the terminal and only committed step in triacylglycerol synthesis by using diacylglycerol and fatty acyl CoA as substrates. Highly expressed in epithelial cells of the small intestine and its activity is essential for the absorption of dietary fats. In liver, plays a role in esterifying exogenous fatty acids to glycerol, and is required to synthesize fat for storage. Also present in female mammary glands, where it produces fat in the milk. May be involved in VLDL (very low density lipoprotein) assembly. In contrast to DGAT2 it is not essential for survival. Functions as the major acyl-CoA retinol acyltransferase (ARAT) in the skin, where it acts to maintain retinoid homeostasis and prevent retinoid toxicity leading to skin and hair disorders. Exhibits additional acyltransferase activities, includin acyl CoA:monoacylglycerol acyltransferase (MGAT), wax monoester and wax diester synthases. Also able to use 1-monoalkylglycerol (1-MAkG) as an acyl acceptor for the synthesis of monoalkyl-monoacylglycerol (MAMAG). The protein is Diacylglycerol O-acyltransferase 1 (DGAT1) of Bos taurus (Bovine).